We begin with the raw amino-acid sequence, 234 residues long: Putative B3 domain-containing protein At2g18810 (234 aa).

The segment at 55 to 88 (CKNQDPEQNPNRVASSPSLCHVKSKRPQKGVSNK) is disordered. Positions 60–72 (PEQNPNRVASSPS) are enriched in polar residues. The segment at residues 87–185 (NKPILDMDFL…MLFFALVLSD (99 aa)) is a DNA-binding region (TF-B3).

Its subcellular location is the nucleus. In Arabidopsis thaliana (Mouse-ear cress), this protein is Putative B3 domain-containing protein At2g18810.